The primary structure comprises 107 residues: Nucleoid-associated protein RBE_0048 (107 aa).

This sequence belongs to the YbaB/EbfC family. Homodimer.

Its subcellular location is the cytoplasm. The protein resides in the nucleoid. In terms of biological role, binds to DNA and alters its conformation. May be involved in regulation of gene expression, nucleoid organization and DNA protection. This Rickettsia bellii (strain RML369-C) protein is Nucleoid-associated protein RBE_0048.